The primary structure comprises 1363 residues: DNA-directed RNA polymerase subunit beta' (1363 aa).

Residues 1–39 form a disordered region; it reads MTSTPSKSRKSSKGSKAAKAAASAPETRPLAKTPPPFRN. Low complexity predominate over residues 14–24; it reads GSKAAKAAASA. 4 residues coordinate Zn(2+): Cys248, Cys315, Cys322, and Cys325.

Belongs to the RNA polymerase beta' chain family. RpoC2 subfamily. In terms of assembly, in cyanobacteria the RNAP catalytic core is composed of 2 alpha, 1 beta, 1 beta', 1 gamma and 1 omega subunit. When a sigma factor is associated with the core the holoenzyme is formed, which can initiate transcription. Zn(2+) serves as cofactor.

The catalysed reaction is RNA(n) + a ribonucleoside 5'-triphosphate = RNA(n+1) + diphosphate. Functionally, DNA-dependent RNA polymerase catalyzes the transcription of DNA into RNA using the four ribonucleoside triphosphates as substrates. The chain is DNA-directed RNA polymerase subunit beta' from Synechococcus sp. (strain WH7803).